We begin with the raw amino-acid sequence, 83 residues long: Small ribosomal subunit protein bS16 (83 aa).

The protein belongs to the bacterial ribosomal protein bS16 family.

The polypeptide is Small ribosomal subunit protein bS16 (Magnetococcus marinus (strain ATCC BAA-1437 / JCM 17883 / MC-1)).